A 424-amino-acid polypeptide reads, in one-letter code: tRNA modification GTPase MnmE (424 aa).

Residues Arg20, Glu77, and Arg117 each contribute to the (6S)-5-formyl-5,6,7,8-tetrahydrofolate site. A TrmE-type G domain is found at 212-351; sequence GVRVVFAGPP…LVRDLRDAAR (140 aa). A K(+)-binding site is contributed by Asn222. GTP-binding positions include 222–227, 241–247, and 266–269; these read NAGKST, SPIAGTT, and DTAG. A Mg(2+)-binding site is contributed by Ser226. K(+)-binding residues include Ser241, Ile243, and Thr246. Thr247 contributes to the Mg(2+) binding site. Position 424 (Lys424) interacts with (6S)-5-formyl-5,6,7,8-tetrahydrofolate.

Belongs to the TRAFAC class TrmE-Era-EngA-EngB-Septin-like GTPase superfamily. TrmE GTPase family. In terms of assembly, homodimer. Heterotetramer of two MnmE and two MnmG subunits. The cofactor is K(+).

It localises to the cytoplasm. Its function is as follows. Exhibits a very high intrinsic GTPase hydrolysis rate. Involved in the addition of a carboxymethylaminomethyl (cmnm) group at the wobble position (U34) of certain tRNAs, forming tRNA-cmnm(5)s(2)U34. The protein is tRNA modification GTPase MnmE of Erythrobacter litoralis (strain HTCC2594).